The sequence spans 300 residues: L-threonine kinase (300 aa).

92-102 (PVAKGMASSTA) contacts ATP.

This sequence belongs to the GHMP kinase family. PduX subfamily.

It localises to the cytoplasm. The catalysed reaction is L-threonine + ATP = O-phospho-L-threonine + ADP + H(+). The protein operates within cofactor biosynthesis; adenosylcobalamin biosynthesis. Its pathway is polyol metabolism; 1,2-propanediol degradation. Functionally, L-threonine kinase that catalyzes the conversion of L-threonine to L-threonine-O-3-phosphate. Involved in the de novo synthesis of adenosylcobalamin (coenzyme B12) and the assimilation of cobyric acid. Uses ATP; the activity with CTP, GTP or UTP is 6, 11, and 3% of the activity with ATP, respectively. In terms of biological role, the 1,2-propanediol (1,2-PD)-specific bacterial microcompartment (BMC) concentrates low levels of 1,2-PD catabolic enzymes, concentrates volatile reaction intermediates thus enhancing pathway flux and keeps the level of toxic, mutagenic propionaldehyde low. This gene probably benefits from its induction via the Pdu promoter, rather than a physical interaction with the BMC. This chain is L-threonine kinase, found in Salmonella typhimurium (strain LT2 / SGSC1412 / ATCC 700720).